The primary structure comprises 332 residues: MVTLNIYSIIKMKRFPKRNYLRKTKVSFFNRSQRHFSQHLNIDIIGPLFKITRKDEKHYNFQYNDGLNILDTPFNNDDDHCTPGKLYFSDSKNICKYLGFGDNLRKISLPIDNPDFKMTKCLYGEKYGANMLIFGEKFDLDKVETYQKMILMDIDIRAGNDNAMIIAAQKGNLEIVKFLVESGANVKSQDNCAVRLASEFGHLDVVEYLYKSGANVKADGNYAITWACKNGHLPVIEFLTSVGADIKAAQNLPIKMAAIGGHLNVIKYLVDRGANISTDNDYVFNIACRNGHTDLAEYAVSLGADIFSDGCYGIDHAIRYNHYKIVDKFIGT.

5 ANK repeats span residues glycine 159 to serine 188, aspartate 190 to alanine 218, aspartate 219 to alanine 248, alanine 249 to threonine 278, and asparagine 280 to serine 308.

The sequence is that of Putative ankyrin repeat protein R896 from Acanthamoeba polyphaga mimivirus (APMV).